The sequence spans 139 residues: MEFHDDKKNELQKKEEIITEAIDTLFQSSAFGNLINGFQNLINSSLKDVQTTIHVRERDTGLYIDITIPATFRDGEIVVDVKSRYLHVTLQEKQKHQNEATFTSMTRTVQLPYEVRQEDMETSWNEQTMTLFFPKNKHE.

The signal sequence occupies residues Met-1–Gly-32. Residues Ser-44 to Glu-139 form the sHSP domain.

This sequence belongs to the small heat shock protein (HSP20) family.

This is an uncharacterized protein from Bacillus subtilis (strain 168).